Consider the following 142-residue polypeptide: MPTPSMEDYIEQIYLLIDEKGYARVSDIAEALSVHPSSVTKMVQKLDKDEYLIYEKYRGLVLTSKGKKIGERLVYRHELLEQFMRIIGVDESKIYNDVEGIEHHLSWEAIDRIGDLVQYFEQDEVRVETLRGVQKANEEKSN.

Residues 1–63 (MPTPSMEDYI…YEKYRGLVLT (63 aa)) enclose the HTH dtxR-type domain. Mn(2+) contacts are provided by D8, E11, H77, E99, E102, and H103.

It belongs to the DtxR/MntR family. As to quaternary structure, homodimer.

The protein localises to the cytoplasm. Its activity is regulated as follows. DNA binding is strongly activated by Mn(2+). Central regulator of manganese homeostasis. The sequence is that of HTH-type transcriptional regulator MntR from Bacillus cereus (strain AH820).